Consider the following 553-residue polypeptide: Solute carrier family 22 member 2 (553 aa).

Residues 1 to 21 are Cytoplasmic-facing; the sequence is MPTVDDILEHIGEFHLFQKQT. The chain crosses the membrane as a helical span at residues 22–42; sequence FFLLALLSGAFTPIYVGIVFL. The Extracellular portion of the chain corresponds to 43-150; the sequence is GFTPNHHCRS…LVCAHSWMLD (108 aa). An N-linked (GlcNAc...) asparagine glycan is attached at asparagine 71. A helical membrane pass occupies residues 151 to 171; that stretch reads LFQSLVNVGFFIGAVGIGYLA. Over 172 to 177 the chain is Cytoplasmic; sequence DRFGRK. Residues 178–198 form a helical membrane-spanning segment; the sequence is FCLLVTILINAISGVLMAISP. Topologically, residues 199 to 210 are extracellular; it reads NYAWMLVFRFLQ. The helical transmembrane segment at 211 to 231 threads the bilayer; it reads GLVSKAGWLIGYILITEFVGL. At 232-238 the chain is on the cytoplasmic side; it reads GYRRTVG. A helical membrane pass occupies residues 239–259; it reads ICYQIAFTVGLLILAGVAYAL. Topologically, residues 260–263 are extracellular; the sequence is PNWR. A helical transmembrane segment spans residues 264–284; that stretch reads WLQFAVTLPNFCFLLYFWCIP. The short motif at 284 to 288 is the Proline-rich sequence element; that stretch reads PESPR. Over 285–348 the chain is Cytoplasmic; it reads ESPRWLISQN…VRTPQIRKHT (64 aa). The helical transmembrane segment at 349-369 threads the bilayer; the sequence is LILMYNWFTSSVLYQGLIMHM. At 370 to 375 the chain is on the extracellular side; that stretch reads GLAGDN. The chain crosses the membrane as a helical span at residues 376–396; it reads IYLDFFYSALVEFPAAFIIIL. Topologically, residues 397–404 are cytoplasmic; that stretch reads TIDRIGRR. The chain crosses the membrane as a helical span at residues 405 to 425; that stretch reads YPWAVSNMVAGAACLASVFIP. The Extracellular segment spans residues 426 to 432; sequence DDLQWLK. The helical transmembrane segment at 433–453 threads the bilayer; it reads ITVACLGRMGITIAYEMVCLV. Over 454–464 the chain is Cytoplasmic; that stretch reads NAELYPTYIRN. The chain crosses the membrane as a helical span at residues 465 to 485; the sequence is LAVLVCSSMCDIGGIVTPFLV. Topologically, residues 486–494 are extracellular; sequence YRLTDIWLE. Residues 495 to 515 traverse the membrane as a helical segment; sequence FPLVVFAVVGLVAGGLVLLLP. The Cytoplasmic portion of the chain corresponds to 516–553; that stretch reads ETKGKALPETIEDAEKMQRPRKKKEKRIYLQVKKAELS.

The protein belongs to the major facilitator (TC 2.A.1) superfamily. Organic cation transporter (TC 2.A.1.19) family. Post-translationally, tyrosine phosphorylated by tyrosine-protein kinase YES1. As to expression, expressed in kidney and ureter. To a lower extent, also expressed in brain and embryo.

It localises to the basolateral cell membrane. The protein localises to the basal cell membrane. It is found in the apical cell membrane. The enzyme catalyses (R)-noradrenaline(out) = (R)-noradrenaline(in). It carries out the reaction (R)-adrenaline(out) = (R)-adrenaline(in). The catalysed reaction is serotonin(out) = serotonin(in). It catalyses the reaction dopamine(out) = dopamine(in). The enzyme catalyses histamine(out) = histamine(in). It carries out the reaction thiamine(in) = thiamine(out). The catalysed reaction is creatinine(in) = creatinine(out). It catalyses the reaction 1-methylnicotinamide(out) = 1-methylnicotinamide(in). The enzyme catalyses guanidine(out) = guanidine(in). It carries out the reaction choline(out) = choline(in). The catalysed reaction is agmatine(out) = agmatine(in). It catalyses the reaction putrescine(out) = putrescine(in). The enzyme catalyses spermidine(in) = spermidine(out). It carries out the reaction tyramine(in) = tyramine(out). The catalysed reaction is L-histidyl-L-proline diketopiperazine(in) = L-histidyl-L-proline diketopiperazine(out). It catalyses the reaction (R)-salsolinol(in) = (R)-salsolinol(out). The enzyme catalyses N-methyl-(R)-salsolinol(in) = N-methyl-(R)-salsolinol(out). It carries out the reaction acetylcholine(in) = acetylcholine(out). The catalysed reaction is prostaglandin F2alpha(out) = prostaglandin F2alpha(in). It catalyses the reaction prostaglandin E2(out) = prostaglandin E2(in). Its activity is regulated as follows. Tyrosine phosphorylation of the transporter leads to activation of the transport activity. TEA uptake is activated by tyrosine phosphorylation. Inhibited by cGMP, most likely through a cGMP-binding protein that interacts with OCT2. Electrogenic voltage-dependent transporter that mediates the transport of a variety of organic cations such as endogenous bioactive amines, cationic drugs and xenobiotics. Functions as a Na(+)-independent, bidirectional uniporter. Cation cellular uptake or release is driven by the electrochemical potential, i.e. membrane potential and concentration gradient. However, may also engage electroneutral cation exchange when saturating concentrations of cation substrates are reached. Predominantly expressed at the basolateral membrane of hepatocytes and proximal tubules and involved in the uptake and disposition of cationic compounds by hepatic and renal clearance from the blood flow. Implicated in monoamine neurotransmitters uptake such as histamine, dopamine, adrenaline/epinephrine, noradrenaline/norepinephrine, serotonin and tyramine, thereby supporting a physiological role in the central nervous system by regulating interstitial concentrations of neurotransmitters. Also capable of transporting dopaminergic neuromodulators cyclo(his-pro), salsolinol and N-methyl-salsolinol, thereby involved in the maintenance of dopaminergic cell integrity in the central nervous system. Mediates the bidirectional transport of acetylcholine (ACh) at the apical membrane of ciliated cell in airway epithelium, thereby playing a role in luminal release of ACh from bronchial epithelium. Also transports guanidine and endogenous monoamines such as vitamin B1/thiamine, creatinine and N-1-methylnicotinamide (NMN). Mediates the uptake and efflux of quaternary ammonium compound choline. Mediates the bidirectional transport of polyamine agmatine and the uptake of polyamines putrescine and spermidine. Able to transport non-amine endogenous compounds such as prostaglandin E2 (PGE2) and prostaglandin F2-alpha (PGF2-alpha). Also involved in the uptake of xenobiotic 4-(4-(dimethylamino)styryl)-N-methylpyridinium (ASP). May contribute to regulate the transport of organic compounds in testis across the blood-testis-barrier. In Mus musculus (Mouse), this protein is Solute carrier family 22 member 2.